The chain runs to 152 residues: Nucleoside diphosphate kinase (152 aa).

Residues lysine 11, phenylalanine 59, arginine 87, threonine 93, arginine 104, and asparagine 114 each contribute to the ATP site. Histidine 117 (pros-phosphohistidine intermediate) is an active-site residue.

Belongs to the NDK family. In terms of assembly, homotetramer. Mg(2+) serves as cofactor.

The protein resides in the cytoplasm. It carries out the reaction a 2'-deoxyribonucleoside 5'-diphosphate + ATP = a 2'-deoxyribonucleoside 5'-triphosphate + ADP. The catalysed reaction is a ribonucleoside 5'-diphosphate + ATP = a ribonucleoside 5'-triphosphate + ADP. In terms of biological role, major role in the synthesis of nucleoside triphosphates other than ATP. The ATP gamma phosphate is transferred to the NDP beta phosphate via a ping-pong mechanism, using a phosphorylated active-site intermediate. In Prochlorococcus marinus (strain MIT 9301), this protein is Nucleoside diphosphate kinase.